Here is a 208-residue protein sequence, read N- to C-terminus: Uracil phosphoribosyltransferase (208 aa).

Residues arginine 78, arginine 103, and 130–138 (DPMLATGGS) contribute to the 5-phospho-alpha-D-ribose 1-diphosphate site. Residues isoleucine 193 and 198–200 (GDA) contribute to the uracil site. Aspartate 199 serves as a coordination point for 5-phospho-alpha-D-ribose 1-diphosphate.

The protein belongs to the UPRTase family. It depends on Mg(2+) as a cofactor.

It carries out the reaction UMP + diphosphate = 5-phospho-alpha-D-ribose 1-diphosphate + uracil. The protein operates within pyrimidine metabolism; UMP biosynthesis via salvage pathway; UMP from uracil: step 1/1. With respect to regulation, allosterically activated by GTP. In terms of biological role, catalyzes the conversion of uracil and 5-phospho-alpha-D-ribose 1-diphosphate (PRPP) to UMP and diphosphate. The polypeptide is Uracil phosphoribosyltransferase (Shewanella baltica (strain OS223)).